The chain runs to 216 residues: V-type ATP synthase subunit D (216 aa).

The protein belongs to the V-ATPase D subunit family.

Functionally, produces ATP from ADP in the presence of a proton gradient across the membrane. This chain is V-type ATP synthase subunit D, found in Clostridium botulinum (strain Loch Maree / Type A3).